The sequence spans 104 residues: ATP-dependent Clp protease adapter protein ClpS (104 aa).

The protein belongs to the ClpS family. As to quaternary structure, binds to the N-terminal domain of the chaperone ClpA.

In terms of biological role, involved in the modulation of the specificity of the ClpAP-mediated ATP-dependent protein degradation. This is ATP-dependent Clp protease adapter protein ClpS from Desulforapulum autotrophicum (strain ATCC 43914 / DSM 3382 / VKM B-1955 / HRM2) (Desulfobacterium autotrophicum).